We begin with the raw amino-acid sequence, 425 residues long: Histidine--tRNA ligase 1 (425 aa).

Belongs to the class-II aminoacyl-tRNA synthetase family. In terms of assembly, homodimer.

The protein resides in the cytoplasm. It carries out the reaction tRNA(His) + L-histidine + ATP = L-histidyl-tRNA(His) + AMP + diphosphate + H(+). The sequence is that of Histidine--tRNA ligase 1 from Bacillus cereus (strain ZK / E33L).